A 576-amino-acid polypeptide reads, in one-letter code: Arginine--tRNA ligase (576 aa).

Residues 122 to 132 carry the 'HIGH' region motif; it reads PNVAKEMHVGH.

The protein belongs to the class-I aminoacyl-tRNA synthetase family. As to quaternary structure, monomer.

It localises to the cytoplasm. The enzyme catalyses tRNA(Arg) + L-arginine + ATP = L-arginyl-tRNA(Arg) + AMP + diphosphate. The chain is Arginine--tRNA ligase from Pectobacterium carotovorum subsp. carotovorum (strain PC1).